Consider the following 350-residue polypeptide: Phenylalanine--tRNA ligase alpha subunit (350 aa).

Glu271 provides a ligand contact to Mg(2+).

The protein belongs to the class-II aminoacyl-tRNA synthetase family. Phe-tRNA synthetase alpha subunit type 1 subfamily. In terms of assembly, tetramer of two alpha and two beta subunits. Mg(2+) is required as a cofactor.

Its subcellular location is the cytoplasm. The enzyme catalyses tRNA(Phe) + L-phenylalanine + ATP = L-phenylalanyl-tRNA(Phe) + AMP + diphosphate + H(+). This is Phenylalanine--tRNA ligase alpha subunit from Acidovorax ebreus (strain TPSY) (Diaphorobacter sp. (strain TPSY)).